The sequence spans 530 residues: UDP-glucuronosyltransferase 1A9 (530 aa).

The N-terminal stretch at 1–25 (MACTGWTSPLPLCVCLLLTCGFAEA) is a signal peptide. N-linked (GlcNAc...) asparagine glycosylation occurs at Asn71. N6-succinyllysine is present on Lys99. Residues Asn292 and Asn344 are each glycosylated (N-linked (GlcNAc...) asparagine). Residues 488-504 (VIGFLLAVVLTVAFITF) traverse the membrane as a helical segment.

Belongs to the UDP-glycosyltransferase family. Homodimer. Homooligomer. Interacts with UGT1A1, UGT1A3, UGT1A4, UGT1A6, UGT1A7, UGT1A8 and UGT1A10 to form heterodimers. Isoform 1 interacts with isoform 2/i2 suggesting that oligomerization is involved in negative regulation of transferase activity by isoform 2. Isoform 1 also interacts with respective i2 isoforms of UGT1A1, UGT1A3, UGT1A4, UGT1A6, UGT1A7, UGT1A8 and UGT1A10. In terms of tissue distribution, expressed in liver, kidney, colon, esophagus and small intestine.

The protein localises to the endoplasmic reticulum membrane. The enzyme catalyses glucuronate acceptor + UDP-alpha-D-glucuronate = acceptor beta-D-glucuronoside + UDP + H(+). It carries out the reaction 2-hydroxy-17beta-estradiol + UDP-alpha-D-glucuronate = 2-hydroxy-17beta-estradiol 3-O-(beta-D-glucuronate) + UDP + H(+). The catalysed reaction is 4-hydroxy-17beta-estradiol + UDP-alpha-D-glucuronate = 17beta-estradiol 4-O-(beta-D-glucuronate) + UDP + H(+). It catalyses the reaction 2-hydroxyestrone + UDP-alpha-D-glucuronate = 2-hydroxyestrone 3-O-(beta-D-glucuronate) + UDP + H(+). The enzyme catalyses 4-hydroxyestrone + UDP-alpha-D-glucuronate = estrone 4-O-(beta-D-glucuronate) + UDP + H(+). It carries out the reaction prunetin + UDP-alpha-D-glucuronate = prunetin-5-O-beta-D-glucuronide + UDP. The catalysed reaction is 8-iso-prostaglandin F2alpha + UDP-alpha-D-glucuronate = 8-iso-prostaglandin F2alpha-glucuronide + UDP + H(+). It catalyses the reaction 5-epi-5-F2t-IsoP + UDP-alpha-D-glucuronate = 5-epi-5-F2t-IsoP-glucuronide + UDP + H(+). The enzyme catalyses (5Z,8Z,11Z,14Z)-eicosatetraenoate + UDP-alpha-D-glucuronate = O-[(5Z),(8Z),(11Z),(14Z)-eicosatetraenoyl]-beta-D-glucuronate + UDP. It carries out the reaction 15-hydroxy-(5Z,8Z,11Z,13E)-eicosatetraenoate + UDP-alpha-D-glucuronate = 15-O-(beta-D-glucuronosyl)-(5Z,8Z,11Z,14Z)-eicosatetraenoate + UDP + H(+). The catalysed reaction is prostaglandin B1 + UDP-alpha-D-glucuronate = 15-O-(beta-D-glucuronosyl)-prostaglandin B1 + UDP + H(+). It catalyses the reaction (E)-ferulate + UDP-alpha-D-glucuronate = (E)-4-O-(beta-D-glucuronosyl)-ferulate + UDP + H(+). The enzyme catalyses (E)-ferulate + UDP-alpha-D-glucuronate = (E)-ferulic acid beta-D-glucuronate ester + UDP. It carries out the reaction candesartan + UDP-alpha-D-glucuronate = candesartan O-beta-D-glucuronoside + UDP. The catalysed reaction is SN-38 + UDP-alpha-D-glucuronate = SN-38 O-beta-D-glucuronide + UDP + H(+). It catalyses the reaction mycophenolate + UDP-alpha-D-glucuronate = mycophenolate 7-O-beta-D-glucuronide + UDP + H(+). In terms of biological role, UDP-glucuronosyltransferase (UGT) that catalyzes phase II biotransformation reactions in which lipophilic substrates are conjugated with glucuronic acid to increase the metabolite's water solubility, thereby facilitating excretion into either the urine or bile. Essential for the elimination and detoxification of drugs, xenobiotics and endogenous compounds. Catalyzes the glucuronidation of endogenous estrogen hormones such as estradiol and estrone. Involved in the glucuronidation of arachidonic acid (AA) and AA-derived eicosanoids including 15-HETE, PGB1 and F2-isoprostanes (8-iso-PGF2alpha and 5-epi-5-F2t-IsoP). Glucuronates the phytochemical ferulic acid efficently at both the phenolic or the carboxylic acid group. Also catalyzes the glucuronidation of the isoflavones genistein, daidzein, glycitein, formononetin, biochanin A and prunetin, which are phytoestrogens with anticancer and cardiovascular properties. Involved in the glucuronidation of the AGTR1 angiotensin receptor antagonist caderastan, a drug which can inhibit the effect of angiotensin II. Involved in the biotransformation of 7-ethyl-10-hydroxycamptothecin (SN-38), the pharmacologically active metabolite of the anticancer drug irinotecan. Also metabolizes mycophenolate, an immunosuppressive agent. Functionally, lacks UGT glucuronidation activity but acts as a negative regulator of isoform 1. This chain is UDP-glucuronosyltransferase 1A9, found in Homo sapiens (Human).